A 243-amino-acid chain; its full sequence is 1-(5-phosphoribosyl)-5-[(5-phosphoribosylamino)methylideneamino] imidazole-4-carboxamide isomerase (243 aa).

The Proton acceptor role is filled by Asp-14. Residue Asp-135 is the Proton donor of the active site.

Belongs to the HisA/HisF family.

It is found in the cytoplasm. It catalyses the reaction 1-(5-phospho-beta-D-ribosyl)-5-[(5-phospho-beta-D-ribosylamino)methylideneamino]imidazole-4-carboxamide = 5-[(5-phospho-1-deoxy-D-ribulos-1-ylimino)methylamino]-1-(5-phospho-beta-D-ribosyl)imidazole-4-carboxamide. The protein operates within amino-acid biosynthesis; L-histidine biosynthesis; L-histidine from 5-phospho-alpha-D-ribose 1-diphosphate: step 4/9. The sequence is that of 1-(5-phosphoribosyl)-5-[(5-phosphoribosylamino)methylideneamino] imidazole-4-carboxamide isomerase from Rubrobacter xylanophilus (strain DSM 9941 / JCM 11954 / NBRC 16129 / PRD-1).